We begin with the raw amino-acid sequence, 101 residues long: Protein S100-A7 (101 aa).

Ser2 is subject to N-acetylserine. 2 EF-hand domains span residues 13 to 48 (MIDM…SACD) and 50 to 85 (KGTN…IATD). Zn(2+)-binding residues include His18 and Asp25. A disulfide bridge connects residues Cys47 and Cys96. The Ca(2+) site is built by Asp63, Asn65, Asp67, Lys69, and Glu74. Positions 87 and 91 each coordinate Zn(2+).

As to quaternary structure, interacts with RANBP9. In terms of tissue distribution, fetal ear, skin, and tongue and human cell lines. Highly up-regulated in psoriatic epidermis. Also highly expressed in the urine of bladder squamous cell carcinoma (SCC) bearing patients.

The protein resides in the cytoplasm. It localises to the secreted. The sequence is that of Protein S100-A7 (S100A7) from Homo sapiens (Human).